The sequence spans 92 residues: UPF0250 protein Pmen_3793 (92 aa).

It belongs to the UPF0250 family.

The chain is UPF0250 protein Pmen_3793 from Ectopseudomonas mendocina (strain ymp) (Pseudomonas mendocina).